The following is a 532-amino-acid chain: Variant surface glycoprotein ILTAT 1.23 (532 aa).

An N-terminal signal peptide occupies residues 1–23; sequence MFKNINAAVLLLILSTRNDYANA. N-linked (GlcNAc...) asparagine glycosylation is present at Asn-66. Disordered regions lie at residues 79-107 and 408-504; these read APKK…RNHA and MQAG…DQDK. Residue Asn-419 is glycosylated (N-linked (GlcNAc...) asparagine). The segment covering 427 to 445 has biased composition (basic and acidic residues); sequence CKWEEKDGKDGKCVADDSK. The segment covering 450-470 has biased composition (low complexity); that stretch reads GNAPAGAGDGTAGTTTTPNCA. Composition is skewed to basic and acidic residues over residues 472-484 and 494-504; these read HTDK…ENKG and KGKEGESDQDK. An N-linked (GlcNAc...) asparagine glycan is attached at Asn-509. Residue Asn-509 is the site of GPI-anchor amidated asparagine attachment. Positions 510–532 are cleaved as a propeptide — removed in mature form; the sequence is GSFLAKKKFALSVVSAAFTALLF.

It is found in the cell membrane. In terms of biological role, VSG forms a coat on the surface of the parasite. The trypanosome evades the immune response of the host by expressing a series of antigenically distinct VSGs from an estimated 1000 VSG genes. The chain is Variant surface glycoprotein ILTAT 1.23 from Trypanosoma brucei brucei.